The primary structure comprises 474 residues: Trehalose-6-phosphate synthase (474 aa).

Arg-10 provides a ligand contact to D-glucose 6-phosphate. UDP-alpha-D-glucose is bound at residue 22-23; the sequence is GG. D-glucose 6-phosphate-binding residues include Tyr-77 and Asp-131. 2 residues coordinate UDP-alpha-D-glucose: Arg-263 and Lys-268. A D-glucose 6-phosphate-binding site is contributed by Arg-301. UDP-alpha-D-glucose is bound by residues Phe-340 and 366-370; that span reads LVAKE.

It belongs to the glycosyltransferase 20 family. Homotetramer.

It carries out the reaction D-glucose 6-phosphate + UDP-alpha-D-glucose = alpha,alpha-trehalose 6-phosphate + UDP + H(+). Its pathway is glycan biosynthesis; trehalose biosynthesis. Functionally, probably involved in the osmoprotection via the biosynthesis of trehalose. Catalyzes the transfer of glucose from UDP-alpha-D-glucose (UDP-Glc) to D-glucose 6-phosphate (Glc-6-P) to form trehalose-6-phosphate. Acts with retention of the anomeric configuration of the UDP-sugar donor. The chain is Trehalose-6-phosphate synthase from Pseudomonas savastanoi (Pseudomonas syringae pv. savastanoi).